Here is a 334-residue protein sequence, read N- to C-terminus: Dihydroorotate dehydrogenase (quinone) (334 aa).

FMN contacts are provided by residues 59-63 (AGLDK) and T83. K63 lines the substrate pocket. 108-112 (NRMGF) lines the substrate pocket. Residues N136 and N169 each contribute to the FMN site. N169 is a substrate binding site. The Nucleophile role is filled by S172. N174 serves as a coordination point for substrate. FMN-binding residues include K214 and T242. Position 243-244 (243-244 (NT)) interacts with substrate. FMN is bound by residues G265, G294, and 315–316 (YS).

It belongs to the dihydroorotate dehydrogenase family. Type 2 subfamily. In terms of assembly, monomer. FMN serves as cofactor.

It localises to the cell membrane. It catalyses the reaction (S)-dihydroorotate + a quinone = orotate + a quinol. The protein operates within pyrimidine metabolism; UMP biosynthesis via de novo pathway; orotate from (S)-dihydroorotate (quinone route): step 1/1. Functionally, catalyzes the conversion of dihydroorotate to orotate with quinone as electron acceptor. This chain is Dihydroorotate dehydrogenase (quinone), found in Acinetobacter baumannii (strain AB0057).